A 257-amino-acid polypeptide reads, in one-letter code: Putative B3 domain-containing protein At2g27410 (257 aa).

Residues 5–50 (ARTTKINHFRGTSTTQNPNRGLEPSPSSYVTRRSKEKRPINVEKRS) are disordered. Over residues 8-35 (TKINHFRGTSTTQNPNRGLEPSPSSYVT) the composition is skewed to polar residues. The TF-B3 DNA-binding region spans 115–209 (TPDFLTEDET…KLCFALTPKN (95 aa)). The tract at residues 212 to 257 (RGNSLPGGDGASTSGESGQVPLPIPPARYSSNSGQGCSGESSSSSS) is disordered. Low complexity predominate over residues 241–257 (SSNSGQGCSGESSSSSS).

The protein localises to the nucleus. This chain is Putative B3 domain-containing protein At2g27410, found in Arabidopsis thaliana (Mouse-ear cress).